Reading from the N-terminus, the 388-residue chain is Probable peptidoglycan glycosyltransferase FtsW (388 aa).

The Cytoplasmic portion of the chain corresponds to 1 to 19; sequence MSAAAPKPRPAHRFHIDQT. Residues 20 to 40 traverse the membrane as a helical segment; it reads LLSVCLCLLGIGFVMVASSSM. Topologically, residues 41–57 are periplasmic; the sequence is HLGVKMADDVSYYPFKQ. A helical membrane pass occupies residues 58–78; that stretch reads LVHIILGLMFAAAILAIPMKY. The Cytoplasmic segment spans residues 79 to 85; it reads WQKIGQP. A helical membrane pass occupies residues 86-106; it reads LFIVGLVLLLVVLIPGVGVKV. The Periplasmic segment spans residues 107 to 117; the sequence is NGSTRWLSLLG. The chain crosses the membrane as a helical span at residues 118-137; that stretch reads LRIQVSEVMKFISVVYMAGY. The Cytoplasmic portion of the chain corresponds to 138 to 147; that stretch reads ITRHSDHVRH. A helical transmembrane segment spans residues 148 to 168; the sequence is SIFGLLRPLMLLSVASILLLL. Residues 169–170 lie on the Periplasmic side of the membrane; the sequence is EP. Residues 171–191 form a helical membrane-spanning segment; it reads DFGSAVVILIIAMGMMFLGGA. Residue Arg-192 is a topological domain, cytoplasmic. Residues 193-213 form a helical membrane-spanning segment; sequence LSPFVALVALISSAGAILASS. Residues 214–271 lie on the Periplasmic side of the membrane; the sequence is ADYRVKRMTSFLNPWEHARDSGYQLTQALISFGRGEVSGVGLGNGLQKLFYLPEAHTD. Residues 272 to 292 form a helical membrane-spanning segment; that stretch reads FLFSVLGEELGLVGVTLVIAL. Residues 293 to 315 are Cytoplasmic-facing; the sequence is FTTLVVRGFSIGEQAEAAGERFS. The helical transmembrane segment at 316–336 threads the bilayer; sequence ALVAYGLVIWFGFQAFVNMGV. The Periplasmic portion of the chain corresponds to 337–348; it reads NMGILPTKGLTL. Residues 349–369 traverse the membrane as a helical segment; it reads PLMSYGGGSMIVMCGAMAVLF. Residues 370-388 are Cytoplasmic-facing; that stretch reads RIHYEVTELHKSNIKGKSR.

This sequence belongs to the SEDS family. FtsW subfamily.

The protein resides in the cell inner membrane. The catalysed reaction is [GlcNAc-(1-&gt;4)-Mur2Ac(oyl-L-Ala-gamma-D-Glu-L-Lys-D-Ala-D-Ala)](n)-di-trans,octa-cis-undecaprenyl diphosphate + beta-D-GlcNAc-(1-&gt;4)-Mur2Ac(oyl-L-Ala-gamma-D-Glu-L-Lys-D-Ala-D-Ala)-di-trans,octa-cis-undecaprenyl diphosphate = [GlcNAc-(1-&gt;4)-Mur2Ac(oyl-L-Ala-gamma-D-Glu-L-Lys-D-Ala-D-Ala)](n+1)-di-trans,octa-cis-undecaprenyl diphosphate + di-trans,octa-cis-undecaprenyl diphosphate + H(+). It participates in cell wall biogenesis; peptidoglycan biosynthesis. Peptidoglycan polymerase that is essential for cell division. The sequence is that of Probable peptidoglycan glycosyltransferase FtsW from Methylomonas methanica (strain DSM 25384 / MC09).